Here is a 275-residue protein sequence, read N- to C-terminus: uncharacterized protein (275 aa).

NAD(+)-binding positions include 20–22 (RAQ), 41–42 (DI), 80–81 (DI), and Asn-107. Substrate is bound at residue Ser-160. The Proton acceptor role is filled by Tyr-173. Residues Lys-177 and 206–208 (VDT) contribute to the NAD(+) site.

Belongs to the short-chain dehydrogenases/reductases (SDR) family.

This is an uncharacterized protein from Mycobacterium tuberculosis (strain CDC 1551 / Oshkosh).